Here is a 334-residue protein sequence, read N- to C-terminus: Dual specificity mitogen-activated protein kinase kinase 6 (334 aa).

The span at 1–11 shows a compositional bias: basic residues; that stretch reads MSQSKGKKRNP. The disordered stretch occupies residues 1–34; sequence MSQSKGKKRNPGLKIPKEAFEQPQTSSTPPRDLD. The segment at 4-19 is d domain; that stretch reads SKGKKRNPGLKIPKEA. A Protein kinase domain is found at 53 to 314; sequence LEPIMELGRG…YPELMQHPFF (262 aa). ATP is bound by residues 59–67 and Lys-82; that span reads LGRGAYGVV. Asp-179 functions as the Proton acceptor in the catalytic mechanism. (Microbial infection) O-acetylserine; by Yersinia YopJ; alternate is present on Ser-207. Residue Ser-207 is modified to Phosphoserine; by MAP3K; alternate. Thr-211 carries the post-translational modification (Microbial infection) O-acetylthreonine; by Yersinia YopJ; alternate. At Thr-211 the chain carries Phosphothreonine; by MAP3K; alternate. The interval 311–334 is DVD domain; sequence HPFFTLHESKGTDVASFVKLILGD.

Belongs to the protein kinase superfamily. STE Ser/Thr protein kinase family. MAP kinase kinase subfamily. Dimer. Interacts (via its D domain) with its substrates MAPK11, MAPK12, MAPK13 and MAPK14. Interacts (via its DVD domain) with MAP3Ks activators like MAP3K5/ASK1, MAP3K1/MEKK1, MAP3K2/MEKK2, MAP3K3/MEKK3, MAP3K4/MEKK4, MAP3K7/TAK1, MAP3K11/MLK3 and MAP3K17/TAOK2. Interacts with DCTN1. Interacts with EIF2AK2/PKR. In terms of assembly, (Microbial infection) Interacts with Yersinia YopJ. Post-translationally, weakly autophosphorylated. Phosphorylated at Ser-207 and Thr-211 by the majority of M3Ks, such as MAP3K5/ASK1, MAP3K1/MEKK1, MAP3K2/MEKK2, MAP3K3/MEKK3, MAP3K4/MEKK4, MAP3K7/TAK1, MAP3K11/MLK3 and MAP3K17/TAOK2. In response to genotoxic stress, MAP3K-phosphorylated MAP2K6 is ubiquitinated and degraded by the SCF(FBXO31) complex. In terms of processing, (Microbial infection) Acetylation of Ser-207 and Thr-211 by Yersinia YopJ prevents phosphorylation and activation, thus blocking the MAPK signaling pathway. As to expression, isoform 2 is only expressed in skeletal muscle. Isoform 1 is expressed in skeletal muscle, heart, and in lesser extent in liver or pancreas.

Its subcellular location is the nucleus. The protein resides in the cytoplasm. It is found in the cytoskeleton. The catalysed reaction is L-seryl-[protein] + ATP = O-phospho-L-seryl-[protein] + ADP + H(+). It catalyses the reaction L-threonyl-[protein] + ATP = O-phospho-L-threonyl-[protein] + ADP + H(+). The enzyme catalyses L-tyrosyl-[protein] + ATP = O-phospho-L-tyrosyl-[protein] + ADP + H(+). Activated by dual phosphorylation on Ser-207 and Thr-211 in response to a variety of cellular stresses, including UV radiation, osmotic shock, hypoxia, inflammatory cytokines, interferon gamma (IFNG), and less often by growth factors. MAP2K6/MKK6 is activated by the majority of M3Ks, such as MAP3K5/ASK1, MAP3K1/MEKK1, MAP3K2/MEKK2, MAP3K3/MEKK3, MAP3K4/MEKK4, MAP3K7/TAK1, MAP3K11/MLK3 and MAP3K17/TAOK2. In terms of biological role, dual specificity protein kinase which acts as an essential component of the MAP kinase signal transduction pathway. With MAP3K3/MKK3, catalyzes the concomitant phosphorylation of a threonine and a tyrosine residue in the MAP kinases p38 MAPK11, MAPK12, MAPK13 and MAPK14 and plays an important role in the regulation of cellular responses to cytokines and all kinds of stresses. Especially, MAP2K3/MKK3 and MAP2K6/MKK6 are both essential for the activation of MAPK11 and MAPK13 induced by environmental stress, whereas MAP2K6/MKK6 is the major MAPK11 activator in response to TNF. MAP2K6/MKK6 also phosphorylates and activates PAK6. The p38 MAP kinase signal transduction pathway leads to direct activation of transcription factors. Nuclear targets of p38 MAP kinase include the transcription factors ATF2 and ELK1. Within the p38 MAPK signal transduction pathway, MAP3K6/MKK6 mediates phosphorylation of STAT4 through MAPK14 activation, and is therefore required for STAT4 activation and STAT4-regulated gene expression in response to IL-12 stimulation. The pathway is also crucial for IL-6-induced SOCS3 expression and down-regulation of IL-6-mediated gene induction; and for IFNG-dependent gene transcription. Has a role in osteoclast differentiation through NF-kappa-B transactivation by TNFSF11, and in endochondral ossification and since SOX9 is another likely downstream target of the p38 MAPK pathway. MAP2K6/MKK6 mediates apoptotic cell death in thymocytes. Acts also as a regulator for melanocytes dendricity, through the modulation of Rho family GTPases. The polypeptide is Dual specificity mitogen-activated protein kinase kinase 6 (MAP2K6) (Homo sapiens (Human)).